The sequence spans 746 residues: Ribosome biogenesis protein BOP1 (746 aa).

The disordered stretch occupies residues 1–116 (MAGSRGAGRT…PCPRTEMASA (116 aa)). Residues 43 to 65 (SHSTGSDSGVSDSEESVFSGLED) are compositionally biased toward low complexity. The segment covering 66–87 (SGSDSSEDDDEGDEEGEDGALD) has biased composition (acidic residues). Positions 88–99 (DEGHSGIKKTTE) are enriched in basic and acidic residues. Residue Thr-106 is modified to Phosphothreonine. Phosphotyrosine is present on Tyr-122. 2 positions are modified to phosphoserine: Ser-126 and Ser-127. The segment at 265-427 (MGWIQPRRPR…CLSVSPGGQW (163 aa)) is sufficient for nucleolar localization. WD repeat units lie at residues 411 to 450 (GHSDLVRCLSVSPGGQWLVSGSDDGSLRLWEVATARCVRT), 452 to 492 (PVGG…RLVA), 532 to 576 (CHGK…SPFR), 577 to 615 (RSHGQVQRVAFHPARPFLLVASQRSVRLYHLLRQELTKK), 618 to 657 (PNCKWVSSLAVHPAGDNVICGSYDSKLVWFDLDLSTKPYR), 661 to 700 (HHKKALRAVAFHPRYPLFASGSDDGSVIVCHGMVYNDLLQ), and 716 to 746 (TRDLGVLDVIFHPTQPWVFSSGADGTVRLFT).

It belongs to the WD repeat BOP1/ERB1 family. As to quaternary structure, component of the PeBoW complex, composed of BOP1, PES1 and WDR12. The complex is held together by BOP1, which interacts with PES1 via its N-terminal domain and with WDR12 via a high-affinity interaction between the seven-bladed beta-propeller domains of the 2 proteins. The NOP7 complex associates with the 66S pre-ribosome. The PeBoW complex associates with DDX27, BOP1 interacts directly with DDX27.

Its subcellular location is the nucleus. The protein localises to the nucleolus. The protein resides in the nucleoplasm. Its function is as follows. Component of the PeBoW complex, which is required for maturation of 28S and 5.8S ribosomal RNAs and formation of the 60S ribosome. This Homo sapiens (Human) protein is Ribosome biogenesis protein BOP1.